We begin with the raw amino-acid sequence, 217 residues long: Harpin secretion protein HrcR (217 aa).

The next 4 membrane-spanning stretches (helical) occupy residues 11–31 (FALFLGALSLIPMLMIVCTCF), 52–72 (PNMALYGIALAATLFVMAPVF), 158–178 (IGFLIYIPFIVIDLIVSNVLL), and 185–205 (VAPMTLSLPLKMLLFVLINGW).

This sequence belongs to the FliP/MopC/SpaP family.

It is found in the cell membrane. Required for the secretion of harpin. This is Harpin secretion protein HrcR (hrcR) from Erwinia amylovora (Fire blight bacteria).